We begin with the raw amino-acid sequence, 325 residues long: Putative gluconeogenesis factor (325 aa).

It belongs to the gluconeogenesis factor family.

Its subcellular location is the cytoplasm. In terms of biological role, required for morphogenesis under gluconeogenic growth conditions. The sequence is that of Putative gluconeogenesis factor from Streptococcus pyogenes serotype M1.